The primary structure comprises 188 residues: Phosphoribosylglycinamide formyltransferase (188 aa).

A N(1)-(5-phospho-beta-D-ribosyl)glycinamide-binding site is contributed by 12 to 14 (GSN). (6R)-10-formyltetrahydrofolate contacts are provided by residues Lys-66, 91 to 94 (MRLI), and Asn-108. His-110 serves as the catalytic Proton donor.

Belongs to the GART family.

It catalyses the reaction N(1)-(5-phospho-beta-D-ribosyl)glycinamide + (6R)-10-formyltetrahydrofolate = N(2)-formyl-N(1)-(5-phospho-beta-D-ribosyl)glycinamide + (6S)-5,6,7,8-tetrahydrofolate + H(+). It participates in purine metabolism; IMP biosynthesis via de novo pathway; N(2)-formyl-N(1)-(5-phospho-D-ribosyl)glycinamide from N(1)-(5-phospho-D-ribosyl)glycinamide (10-formyl THF route): step 1/1. In terms of biological role, catalyzes the transfer of a formyl group from 10-formyltetrahydrofolate to 5-phospho-ribosyl-glycinamide (GAR), producing 5-phospho-ribosyl-N-formylglycinamide (FGAR) and tetrahydrofolate. The chain is Phosphoribosylglycinamide formyltransferase from Staphylococcus aureus (strain MRSA252).